Here is a 737-residue protein sequence, read N- to C-terminus: uncharacterized protein (737 aa).

The next 7 membrane-spanning stretches (helical) occupy residues 11-31, 36-56, 60-80, 118-138, 142-162, 164-184, and 200-220; these read LSLLLFYFLAFLLLWEWLRPL, ETKHTGFFSVFIGLTFLLTFF, WFVTVPFCVIFTLISIHILFY, TLLFFVLLWLLVYLLHYWVIY, ILFFFLMTVAYITILDTFTPY, ATFAVIRIVLIGFFMLGLLYL, and VLKWFLPLSVLVLAATGFGLA. The disordered stretch occupies residues 556–611; the sequence is PAQFTSSDTKDSGSDSSSSPKKAKEKQKEEKKQPQKEEKQKEKREPAVSKKPSASH. Residues 581-603 are compositionally biased toward basic and acidic residues; it reads KQKEEKKQPQKEEKQKEKREPAV. A helical transmembrane segment spans residues 618-638; that stretch reads LYAALAVLAVLLVAAVLLYVF.

Its subcellular location is the cell membrane. This is an uncharacterized protein from Bacillus subtilis (strain 168).